A 353-amino-acid polypeptide reads, in one-letter code: 3'(2'),5'-bisphosphate nucleotidase (353 aa).

Aspartate 50 functions as the Proton acceptor in the catalytic mechanism. Residues glutamate 73, aspartate 136, isoleucine 138, and aspartate 139 each contribute to the Mg(2+) site. The active-site Proton acceptor is the threonine 141. Residues threonine 141, histidine 232, serine 256, lysine 259, arginine 273, and aspartate 286 each contribute to the adenosine 3',5'-bisphosphate site. 5 residues coordinate AMP: histidine 232, serine 256, lysine 259, arginine 273, and aspartate 286. A Mg(2+)-binding site is contributed by aspartate 286.

This sequence belongs to the inositol monophosphatase superfamily. Requires Mg(2+) as cofactor.

The enzyme catalyses 3'-phosphoadenylyl sulfate + H2O = adenosine 5'-phosphosulfate + phosphate. It carries out the reaction adenosine 3',5'-bisphosphate + H2O = AMP + phosphate. It catalyses the reaction adenosine 2',5'-bisphosphate + H2O = AMP + phosphate. The catalysed reaction is 1D-myo-inositol 1,4-bisphosphate + H2O = 1D-myo-inositol 4-phosphate + phosphate. The enzyme catalyses 1D-myo-inositol 1,3,4-trisphosphate + H2O = 1D-myo-inositol 3,4-bisphosphate + phosphate. With respect to regulation, inhibited by Li(+) and Na(+). Functionally, phosphatase that converts adenosine 3'-phosphate 5'-phosphosulfate (PAPS) to adenosine 5'-phosphosulfate (APS) and 3'(2')-phosphoadenosine 5'-phosphate (PAP) to AMP. May regulate the flux of sulfur in the sulfur-activation pathway by converting PAPS to APS. Is also able to hydrolyze inositol 1,4-bisphosphate (Ins(1,4)P2) and inositol 1,3,4-trisphosphate (Ins(1,3,4)P3), but is not active on inositol 1,4,5-trisphosphate, inositol 1-phosphate, fructose 1,6-bisphosphate, AMP and ATP. In terms of biological role, confers resistance to lithium. The protein is 3'(2'),5'-bisphosphate nucleotidase (tol1) of Schizosaccharomyces pombe (strain 972 / ATCC 24843) (Fission yeast).